The chain runs to 287 residues: ATP synthase gamma chain (287 aa).

The protein belongs to the ATPase gamma chain family. As to quaternary structure, F-type ATPases have 2 components, CF(1) - the catalytic core - and CF(0) - the membrane proton channel. CF(1) has five subunits: alpha(3), beta(3), gamma(1), delta(1), epsilon(1). CF(0) has three main subunits: a, b and c.

The protein localises to the cell inner membrane. In terms of biological role, produces ATP from ADP in the presence of a proton gradient across the membrane. The gamma chain is believed to be important in regulating ATPase activity and the flow of protons through the CF(0) complex. This chain is ATP synthase gamma chain, found in Enterobacter sp. (strain 638).